The primary structure comprises 329 residues: GTPase Obg (329 aa).

The Obg domain occupies methionine 1–leucine 159. In terms of domain architecture, OBG-type G spans alanine 160–glycine 328. Residues glycine 166 to serine 173, phenylalanine 191 to valine 195, aspartate 213 to glycine 216, asparagine 280 to glutamate 283, and serine 309 to valine 311 contribute to the ATP site. Positions 173 and 193 each coordinate Mg(2+).

The protein belongs to the TRAFAC class OBG-HflX-like GTPase superfamily. OBG GTPase family. In terms of assembly, monomer. Requires Mg(2+) as cofactor.

The protein localises to the cytoplasm. In terms of biological role, an essential GTPase which binds GTP, GDP and possibly (p)ppGpp with moderate affinity, with high nucleotide exchange rates and a fairly low GTP hydrolysis rate. Plays a role in control of the cell cycle, stress response, ribosome biogenesis and in those bacteria that undergo differentiation, in morphogenesis control. The chain is GTPase Obg from Synechococcus sp. (strain WH7803).